The following is a 159-amino-acid chain: Phosphopantetheine adenylyltransferase (159 aa).

Position 16 (histidine 16) interacts with ATP. Residues lysine 40, methionine 72, and arginine 86 each contribute to the substrate site. Residues 87-89 (GLR), glutamate 97, and 122-128 (YQYLSAS) each bind ATP.

This sequence belongs to the bacterial CoaD family. In terms of assembly, homohexamer. Mg(2+) serves as cofactor.

The protein resides in the cytoplasm. It carries out the reaction (R)-4'-phosphopantetheine + ATP + H(+) = 3'-dephospho-CoA + diphosphate. It participates in cofactor biosynthesis; coenzyme A biosynthesis; CoA from (R)-pantothenate: step 4/5. In terms of biological role, reversibly transfers an adenylyl group from ATP to 4'-phosphopantetheine, yielding dephospho-CoA (dPCoA) and pyrophosphate. The protein is Phosphopantetheine adenylyltransferase of Dehalococcoides mccartyi (strain ATCC BAA-2266 / KCTC 15142 / 195) (Dehalococcoides ethenogenes (strain 195)).